A 309-amino-acid polypeptide reads, in one-letter code: Ribosomal protein L11 methyltransferase (309 aa).

S-adenosyl-L-methionine contacts are provided by Thr160, Gly181, Asp203, and Asn245.

Belongs to the methyltransferase superfamily. PrmA family.

The protein resides in the cytoplasm. It catalyses the reaction L-lysyl-[protein] + 3 S-adenosyl-L-methionine = N(6),N(6),N(6)-trimethyl-L-lysyl-[protein] + 3 S-adenosyl-L-homocysteine + 3 H(+). Methylates ribosomal protein L11. The chain is Ribosomal protein L11 methyltransferase from Caldanaerobacter subterraneus subsp. tengcongensis (strain DSM 15242 / JCM 11007 / NBRC 100824 / MB4) (Thermoanaerobacter tengcongensis).